The sequence spans 286 residues: 3-hydroxyanthranilate 3,4-dioxygenase (286 aa).

The interval 1–160 (MERCVRVKSW…SEQYRTGKPN (160 aa)) is domain A (catalytic). Position 43 (Arg-43) interacts with O2. 3 residues coordinate Fe cation: His-47, Glu-53, and His-91. Glu-53 is a substrate binding site. Arg-95 and Glu-105 together coordinate substrate. The linker stretch occupies residues 161 to 177 (PDQLLKEPPFPLSTRSV). The domain B stretch occupies residues 178-286 (MEPMSLKAWL…QDPACKKPLG (109 aa)).

This sequence belongs to the 3-HAO family. As to quaternary structure, monomer. Fe(2+) serves as cofactor.

It localises to the cytoplasm. The protein resides in the cytosol. The catalysed reaction is 3-hydroxyanthranilate + O2 = (2Z,4Z)-2-amino-3-carboxymuconate 6-semialdehyde. Its pathway is cofactor biosynthesis; NAD(+) biosynthesis; quinolinate from L-kynurenine: step 3/3. Catalyzes the oxidative ring opening of 3-hydroxyanthranilate to 2-amino-3-carboxymuconate semialdehyde, which spontaneously cyclizes to quinolinate. This is 3-hydroxyanthranilate 3,4-dioxygenase (Haao) from Rattus norvegicus (Rat).